A 268-amino-acid chain; its full sequence is Indole-3-glycerol phosphate synthase (268 aa).

This sequence belongs to the TrpC family.

The catalysed reaction is 1-(2-carboxyphenylamino)-1-deoxy-D-ribulose 5-phosphate + H(+) = (1S,2R)-1-C-(indol-3-yl)glycerol 3-phosphate + CO2 + H2O. It functions in the pathway amino-acid biosynthesis; L-tryptophan biosynthesis; L-tryptophan from chorismate: step 4/5. In Magnetococcus marinus (strain ATCC BAA-1437 / JCM 17883 / MC-1), this protein is Indole-3-glycerol phosphate synthase.